The sequence spans 580 residues: Cytochrome P450 monooxygenase helB1 (580 aa).

A disordered region spans residues 1 to 32; that stretch reads MRTYAIRPVSNRLPGPIEPKKHRRDRDNSTTG. Asn-28 carries an N-linked (GlcNAc...) asparagine glycan. A helical membrane pass occupies residues 61 to 81; sequence FLNTISVLQVLAAIFIGALTY. Cys-497 is a heme binding site.

This sequence belongs to the cytochrome P450 family. Requires heme as cofactor.

The protein localises to the membrane. It participates in mycotoxin biosynthesis. Its function is as follows. Cytochrome P450 monooxygenase; part of the gene cluster that mediates the biosynthesis of helvolic acid, an antibacterial nortriterpenoid. Protostadienol synthase helA cyclizes (3S)-oxidosqualene to (17Z)-protosta-17(20),24-dien-3-beta-ol (protostadienol). The synthesis of protostadienol is followed by several steps of monooxygenation, dehydrogenation, and acyl transfer to yield the final helvolic acid. Following the cyclization to the tetracyclic protostadienol by helA, cytochrome P450 monooxygenases helB1-mediated and helB2-mediated oxidation at C-4 and C-16, acyltransferase helD2-dependent acetylation of 16-OH, oxidation of C-21 by cytochrome P450 monooxygenase helB4, and short chain dehydrogenase helC-dependent oxidative decarboxylation yield the fusidane skeleton. This intermediate is further modified in three additional steps mediated by the cytochrome P450 monooxygenase helB3, the acyltransferase helD1, and the 3-ketosteroid 1-dehydrogenase helE to give helvolic acid. Compared with the late stages in the biosynthesis of helvolic acid, enzymes involved in the early stage modifications act in a relatively strict order. The hydroxylation of C-16 by helB1 and subsequent acetylation by helD2 should occur before the helB3-mediated oxidation of C-21. C-4 demethylation in fusidane-type antibiotics proceeds in an unusual manner though it is also achieved by oxidative decarboxylation. The methyl group at C-4 beta position is oxidized by helB1 and subsequently removed by the short chain dehydrogenase helC. This is Cytochrome P450 monooxygenase helB1 from Aspergillus fumigatus (strain ATCC MYA-4609 / CBS 101355 / FGSC A1100 / Af293) (Neosartorya fumigata).